A 226-amino-acid polypeptide reads, in one-letter code: Isoprenyl transferase (226 aa).

Residue Asp12 is part of the active site. Asp12 contributes to the Mg(2+) binding site. Residues 13–16, Trp17, Lys25, His29, and 57–59 each bind substrate; these read GNAR and SSE. The active-site Proton acceptor is the Asn60. Substrate contacts are provided by residues Trp61, Arg63, Arg174, and 180-182; that span reads RIS. Residue Glu193 participates in Mg(2+) binding.

The protein belongs to the UPP synthase family. As to quaternary structure, homodimer. Mg(2+) serves as cofactor.

Catalyzes the condensation of isopentenyl diphosphate (IPP) with allylic pyrophosphates generating different type of terpenoids. This Rickettsia bellii (strain RML369-C) protein is Isoprenyl transferase.